The sequence spans 594 residues: MQKRIALSFPEEVLEHVFSFIQLDKDRNSVSLVCKSWYEIERWCRRKVFIGNCYAVSPATVIRRFPKVRSVELKGKPHFADFNLVPDGWGGYVYPWIEAMSSSYTWLEEIRLKRMVVTDDCLELIAKSFKNFKVLVLSSCEGFSTDGLAAIAATCRNLKELDLRESDVDDVSGHWLSHFPDTYTSLVSLNISCLASEVSFSALERLVTRCPNLKSLKLNRAVPLEKLATLLQRAPQLEELGTGGYTAEVRPDVYSGLSVALSGCKELRCLSGFWDAVPAYLPAVYSVCSRLTTLNLSYATVQSYDLVKLLCQCPKLQRLWVLDYIEDAGLEVLASTCKDLRELRVFPSEPFVMEPNVALTEQGLVSVSMGCPKLESVLYFCRQMTNAALITIARNRPNMTRFRLCIIEPKAPDYLTLEPLDIGFGAIVEHCKDLRRLSLSGLLTDKVFEYIGTYAKKMEMLSVAFAGDSDLGMHHVLSGCDSLRKLEIRDCPFGDKALLANASKLETMRSLWMSSCSVSFGACKLLGQKMPKLNVEVIDERGAPDSRPESCPVERVFIYRTVAGPRFDMPGFVWNMDQDSTMRFSRQIITTNGL.

Residues 3 to 50 (KRIALSFPEEVLEHVFSFIQLDKDRNSVSLVCKSWYEIERWCRRKVFI) enclose the F-box domain. 1D-myo-inositol hexakisphosphate is bound at residue Lys-74. The segment at 81–82 (DF) is interaction with auxin-responsive proteins. 1D-myo-inositol hexakisphosphate-binding positions include 113 to 114 (KR) and Arg-344. The segment at 347-352 (PSEPFV) is interaction with auxin-responsive proteins. 401–403 (RFR) is a binding site for 1D-myo-inositol hexakisphosphate. Arg-403 contributes to the (indol-3-yl)acetate binding site. Positions 405 to 409 (CIIEP) are interaction with auxin-responsive proteins. Arg-436 serves as a coordination point for 1D-myo-inositol hexakisphosphate. 438 to 439 (SL) contributes to the (indol-3-yl)acetate binding site. The interval 464-465 (AF) is interaction with auxin-responsive proteins. 1D-myo-inositol hexakisphosphate is bound by residues 484–485 (RK) and Arg-509.

Interacts with auxin. Part of a SCF E3 ubiquitin ligase complex SCF(TIR1) composed of SKP1, CUL1, RBX1 and TIR1. SCF(TIR1) interacts with the COP9 signalosome (CSN) complex. Interacts with Aux/IAA proteins (IAA3, IAA7, IAA12 and IAA17) in an auxin-dependent manner. The interaction with IAA3, a negative regulator of auxin responses, is promoted by auxin, but repressed by juglon (5-hydroxy-1,4-naphthoquinone). Interactions with auxin-responsive proteins is inactivated by auxin antagonists. Expressed in roots, stems, leaves and flowers. In adult plants, mostly expressed in floral stigma, anther filaments, abscission zones and vascular tissues.

It localises to the nucleus. Its pathway is protein modification; protein ubiquitination. Its function is as follows. Auxin receptor that mediates Aux/IAA proteins proteasomal degradation and auxin-regulated transcription. The SCF(TIR1) E3 ubiquitin ligase complex is involved in auxin-mediated signaling pathway that regulate root and hypocotyl growth, lateral root formation, cell elongation, and gravitropism. Appears to allow pericycle cells to overcome G2 arrest prior to lateral root development. Plays a role in ethylene signaling in roots. Confers sensitivity to the virulent bacterial pathogen P.syringae. In Arabidopsis thaliana (Mouse-ear cress), this protein is Protein TRANSPORT INHIBITOR RESPONSE 1 (TIR1).